Consider the following 328-residue polypeptide: Cytochrome f (328 aa).

The first 44 residues, 1 to 44 (MRNPDTLGLWTKTMVALRRFTVLAIATVSVFLITDLGLPQAASA), serve as a signal peptide directing secretion. 4 residues coordinate heme: Tyr-45, Cys-66, Cys-69, and His-70. Residues 296–313 (FLVLFLAGIMLSQILLVL) traverse the membrane as a helical segment.

Belongs to the cytochrome f family. The 4 large subunits of the cytochrome b6-f complex are cytochrome b6, subunit IV (17 kDa polypeptide, PetD), cytochrome f and the Rieske protein, while the 4 small subunits are PetG, PetL, PetM and PetN. The complex functions as a dimer. Heme is required as a cofactor.

The protein localises to the cellular thylakoid membrane. In terms of biological role, component of the cytochrome b6-f complex, which mediates electron transfer between photosystem II (PSII) and photosystem I (PSI), cyclic electron flow around PSI, and state transitions. This is Cytochrome f (petA) from Synechocystis sp. (strain ATCC 27184 / PCC 6803 / Kazusa).